A 523-amino-acid polypeptide reads, in one-letter code: GMP synthase [glutamine-hydrolyzing] (523 aa).

The 198-residue stretch at lysine 8–lysine 205 folds into the Glutamine amidotransferase type-1 domain. The active-site Nucleophile is cysteine 85. Catalysis depends on residues histidine 179 and glutamate 181. Residues tryptophan 206–arginine 398 form the GMPS ATP-PPase domain. Serine 233–serine 239 contacts ATP.

In terms of assembly, homodimer.

The catalysed reaction is XMP + L-glutamine + ATP + H2O = GMP + L-glutamate + AMP + diphosphate + 2 H(+). It functions in the pathway purine metabolism; GMP biosynthesis; GMP from XMP (L-Gln route): step 1/1. Functionally, catalyzes the synthesis of GMP from XMP. The chain is GMP synthase [glutamine-hydrolyzing] from Haemophilus influenzae (strain 86-028NP).